We begin with the raw amino-acid sequence, 264 residues long: Myozenin-2 (264 aa).

An Omega-N-methylarginine modification is found at Arg53. Positions 90–135 (GKVDGSNLEGGSQQAPLTPPNTPDPRSPPNPDNIAPGYSGPLKEIP) are disordered. Ser101 carries the phosphoserine modification. Residues 106–120 (LTPPNTPDPRSPPNP) are compositionally biased toward pro residues. Phosphothreonine is present on residues Thr107 and Thr111. Residue Ser116 is modified to Phosphoserine.

The protein belongs to the myozenin family. In terms of assembly, interacts via its C-terminus with spectrin repeats 3 and 4 of ACTN2. Interacts with ACTN1, LDB3, MYOT and PPP3CA.

It is found in the cytoplasm. It localises to the myofibril. The protein resides in the sarcomere. The protein localises to the z line. In terms of biological role, myozenins may serve as intracellular binding proteins involved in linking Z line proteins such as alpha-actinin, gamma-filamin, TCAP/telethonin, LDB3/ZASP and localizing calcineurin signaling to the sarcomere. Plays an important role in the modulation of calcineurin signaling. May play a role in myofibrillogenesis. This Pongo abelii (Sumatran orangutan) protein is Myozenin-2 (MYOZ2).